Reading from the N-terminus, the 192-residue chain is Transmembrane protein 11, mitochondrial (192 aa).

A disordered region spans residues 1–20 (MAAWGRRRLGPGSSGGSARE). 2 helical membrane passes run 84–100 (TAVL…LALP) and 107–124 (ISLP…LYGI).

The protein belongs to the TMEM11 family. Associates with the mitochondrial contact site and cristae organizing system (MICOS) complex, composed of at least MICOS10/MIC10, CHCHD3/MIC19, CHCHD6/MIC25, APOOL/MIC27, IMMT/MIC60, APOO/MIC23/MIC26 and QIL1/MIC13. This complex was also known under the names MINOS or MitOS complex. The MICOS complex associates with mitochondrial outer membrane proteins SAMM50, MTX1, MTX2 and DNAJC11, mitochondrial inner membrane protein TMEM11 and with HSPA9. Interacts with IMMT/MIC60.

It is found in the mitochondrion inner membrane. In terms of biological role, plays a role in mitochondrial morphogenesis. This is Transmembrane protein 11, mitochondrial (TMEM11) from Homo sapiens (Human).